A 118-amino-acid polypeptide reads, in one-letter code: Mitochondrial import inner membrane translocase subunit Tim10 B (118 aa).

A Twin CX3C motif motif is present at residues 31–55 (CFQRCVPSLHHRALDAEEEACLHSC). 2 cysteine pairs are disulfide-bonded: Cys31–Cys55 and Cys35–Cys51. Residues 89–118 (SAVPHATAEQLETSPSRSLPSGNLGKGGAG) are disordered. Residues 98–109 (QLETSPSRSLPS) show a composition bias toward polar residues.

Belongs to the small Tim family. As to quaternary structure, component of the TIM22 complex, which core is composed of TIMM22, associated with TIMM10 (TIMM10A and/or TIMM10B), TIMM9, AGK and TIMM29.

It localises to the mitochondrion inner membrane. Component of the TIM22 complex, a complex that mediates the import and insertion of multi-pass transmembrane proteins into the mitochondrial inner membrane. The TIM22 complex forms a twin-pore translocase that uses the membrane potential as the external driving force. In the TIM22 complex, it may act as a docking point for the soluble 70 kDa complex that guides the target proteins in transit through the aqueous mitochondrial intermembrane space. The chain is Mitochondrial import inner membrane translocase subunit Tim10 B (TIMM10B) from Bos taurus (Bovine).